A 1425-amino-acid chain; its full sequence is MDVLEMLRASASGSYNTIFSDAWCQYVSKQITATVYMYFALVMMSLLFIAWFLYFKRMARLRLRDEIARSISTVTNSSGDMRGLRFRKRDKMLFYGRRMLRKMKNVSGQMYSSGKGYKRRAVMRFARRILQLRRDNMPLEMRTVEPPAEYLEETIEGSDRVPPDALYMLQSIRIFGHFEKPVFLRLCKHTQLLELMAGDYLFKITDPDDSVYIVQSGMINVYISNADGSTLSLKTVRKGESVTSLLSFIDVLSGNPSYYKTVTAKAIEKSVVIRLPMQAFEEVFQDNPDVMIRVIQVIMIRLQRVLFTALRNYLGLNAELVQNHMRYKSVSTMSGPINSQTSQSSRQAPNGPPMVISQMNLMQSAVSGTGSSGVSVTVTRPPSSPSRHSREEHTLSDPNPNPDGSFHGTTNLFTEVHGDAPNADLFHQQQQQHSVGNLSTRRSSITLMAPDGSHSCLQTPGVTTSIDMRLVQSSAVDSLRKELGLSEEDSHIIEPFVELRELEPNVTLITEGNADDVCVWFVMTGTLAVYQSNQDATRAKQDKSDMLIHFVHPGEIVGGLAMLTGEASAYTIRSRSITRIAFIRRAAIYQIMRQRPRIVLDLGNGVVRRLSPLVRQCDYALDWIFLESGRAVYRQDESSDSTYIVLSGRMRSVITHPGGKKEIVGEYGKGDLVGIVEMITETSRTTTVMAVRDSELAKLPEGLFNAIKLRYPIVVTKLISFLSHRFLGSMQTRSGSGAPGAPVEANPVTHKYSTVALVPITDEVPMTPFTYELYHSLCAIGPVLRLTSDVVRKQLGSNIFEAANEYRLTSWLAQQEDRNIITLYQCDSSLSAWTQRCMRQADVILIVGLGDRSHLVGKFEREIDRLAMRTQKELVLLYPEASNAKPANTLSWLNARPWVTKHHHVLCVKRIFTRKSQYRINDLYSRVLLSEPNMHSDFSRLARWLTGNSIGLVLGGGGARGAAHIGMLKAIQEAGIPVDMVGGVSIGALMGALWCSERNITTVTQKAREWSKKMTKWFLQLLDLTYPITSMFSGREFNKTIHDTFGDVSIEDLWIPYFTLTTDITASCHRIHTNGSLWRYVRSSMSLSGYMPPLCDPKDGHLLLDGGYVNNLPADVMHNLGAAHIIAIDVGSQDDTDLTNYGDDLSGWWLLYKKWNPFTSPVKVPDLPDIQSRLAYVSCVRQLEEVKNSDYCEYIRPPIDKYKTLAFGSFDEIRDVGYVFGKNYFESMAKAGRLGRFNQWFNKEPPKRVNHASLNEYTFIDLAQIVCRLPETYAVNTAELFSEDEDCDGYISEPTTLNTDRRRIQVSRAGNSLSFSETEMDSDVELDLKLERKTDKSTQSSPPSNSRSDMRGKEEARHMSNWHWGVKHKDETGSGATEATKTQTGQEQELQQEQQDQGATAEQLVDKDKEENKENRSSPNNETKN.

Topologically, residues 1 to 34 (MDVLEMLRASASGSYNTIFSDAWCQYVSKQITAT) are lumenal. Residues 35-55 (VYMYFALVMMSLLFIAWFLYF) form a helical membrane-spanning segment. Residues 56 to 1425 (KRMARLRLRD…RSSPNNETKN (1370 aa)) are Cytoplasmic-facing. 174–301 (IFGHFEKPVF…IRVIQVIMIR (128 aa)) contacts a nucleoside 3',5'-cyclic phosphate. Composition is skewed to polar residues over residues 332–348 (TMSG…SRQA) and 357–366 (SQMNLMQSAV). The tract at residues 332 to 410 (TMSGPINSQT…NPDGSFHGTT (79 aa)) is disordered. Low complexity predominate over residues 367-381 (SGTGSSGVSVTVTRP). Serine 444 and serine 453 each carry phosphoserine. Residues 482-609 (ELGL…VVRR) and 598-727 (IVLD…HRFL) contribute to the a nucleoside 3',5'-cyclic phosphate site. In terms of domain architecture, PNPLA spans 952–1118 (LVLGGGGARG…VNNLPADVMH (167 aa)). The GXGXXG motif lies at 956–961 (GGGARG). Residues 983–987 (GVSIG) carry the GXSXG motif. Serine 985 acts as the Nucleophile in catalysis. Residue aspartate 1105 is the Proton acceptor of the active site. Residues 1105–1107 (DGG) carry the DGA/G motif. The residue at position 1160 (serine 1160) is a Phosphoserine. The segment at 1330 to 1425 (LERKTDKSTQ…RSSPNNETKN (96 aa)) is disordered. Low complexity predominate over residues 1337-1347 (STQSSPPSNSR). The span at 1348-1358 (SDMRGKEEARH) shows a compositional bias: basic and acidic residues. The segment covering 1380–1403 (TKTQTGQEQELQQEQQDQGATAEQ) has biased composition (low complexity). Basic and acidic residues predominate over residues 1404-1416 (LVDKDKEENKENR).

The protein belongs to the NTE family. In terms of assembly, interacts with Pka-C3; interaction inhibits the catalytic function of Pka-C3 and the esterase activity of sws. Isoform A and isoform B are expressed in the entire brain cortex; cortical cell bodies of adult brain. Sws and Pka-C3 are colocalized in all neurons.

It is found in the endoplasmic reticulum membrane. The enzyme catalyses a 1-acyl-sn-glycero-3-phosphocholine + H2O = sn-glycerol 3-phosphocholine + a fatty acid + H(+). Its function is as follows. Phospholipase B that deacylates intracellular phosphatidylcholine (PtdCho), generating glycerophosphocholine (GroPtdCho). This deacylation occurs at both sn-2 and sn-1 positions of PtdCho. Its specific chemical modification by certain organophosphorus (OP) compounds leads to distal axonopathy. Plays a role in the signaling mechanism between neurons and glia that regulates glia wrapping during development of the adult brain. Essential for membrane lipid homeostasis and cell survival in both neurons and glia of the adult brain. The sequence is that of Neuropathy target esterase sws (sws) from Drosophila melanogaster (Fruit fly).